The primary structure comprises 261 residues: Calbindin (261 aa).

Ala-2 carries the post-translational modification N-acetylalanine. The tract at residues 2–7 (AESHLQ) is interaction with RANBP9. 5 consecutive EF-hand domains span residues 11-46 (ITAS…LLQA), 53-88 (ELSP…EENF), 98-133 (KSCE…LLEK), 142-177 (KLAE…QENF), and 186-221 (MCGK…LCEK). 5 residues coordinate Ca(2+): Asp-24, Asp-26, Ser-28, Tyr-30, and Glu-35. Ca(2+) is bound by residues Asp-111, Asp-113, Ser-115, Glu-122, Asp-155, Asn-157, Asp-159, Lys-161, Glu-166, Asp-199, Asp-201, Asn-203, Tyr-205, and Glu-210.

The protein belongs to the calbindin family. As to quaternary structure, interacts with RANBP9. Expressed in the modiolar nerve root and in bushy neurons in the ventral cochlear nucleus (at protein level).

In terms of biological role, buffers cytosolic calcium. May stimulate a membrane Ca(2+)-ATPase and a 3',5'-cyclic nucleotide phosphodiesterase. In Mus musculus (Mouse), this protein is Calbindin (Calb1).